Here is a 292-residue protein sequence, read N- to C-terminus: 4-hydroxy-tetrahydrodipicolinate synthase (292 aa).

Residue Thr45 coordinates pyruvate. Residue Tyr133 is the Proton donor/acceptor of the active site. Lys161 functions as the Schiff-base intermediate with substrate in the catalytic mechanism. A pyruvate-binding site is contributed by Ile203.

This sequence belongs to the DapA family. Homodimer.

It localises to the cytoplasm. The catalysed reaction is L-aspartate 4-semialdehyde + pyruvate = (2S,4S)-4-hydroxy-2,3,4,5-tetrahydrodipicolinate + H2O + H(+). The protein operates within amino-acid biosynthesis; L-lysine biosynthesis via DAP pathway; (S)-tetrahydrodipicolinate from L-aspartate: step 3/4. In terms of biological role, catalyzes the condensation of (S)-aspartate-beta-semialdehyde [(S)-ASA] and pyruvate to 4-hydroxy-tetrahydrodipicolinate (HTPA). The protein is 4-hydroxy-tetrahydrodipicolinate synthase of Ectopseudomonas mendocina (strain ymp) (Pseudomonas mendocina).